Here is a 793-residue protein sequence, read N- to C-terminus: Transcription factor opdR (793 aa).

Disordered regions lie at residues 1–29 (MAQDQNVPLVATSPPRKRRRPPKSCDPCR), 60–113 (TASS…QSQN), and 457–476 (LDDEQFGPKTERLPRPQPSE). Residues 25-53 (CDPCRRRKVRCDRKFPCGQCERARTALQC) constitute a DNA-binding region (zn(2)-C6 fungal-type).

It is found in the nucleus. Transcription factor; part of the gene cluster that mediates the biosynthesis of oxopyrrolidines, polyketide-amino acid hybrid compounds with feature structures of tetramic acid. The sequence is that of Transcription factor opdR from Penicillium oxalicum (strain 114-2 / CGMCC 5302) (Penicillium decumbens).